A 484-amino-acid polypeptide reads, in one-letter code: Chromosomal replication initiator protein DnaA (484 aa).

A domain I, interacts with DnaA modulators region spans residues 1 to 83 (MQPPSQDWAS…LAWRTVWPGI (83 aa)). Residues 83-146 (IAEVKVSVRN…EKKAEGEDQN (64 aa)) form a domain II region. Residues 110–146 (GDQPRPLPKKPAKKKQSVPATPKSTSPEKKAEGEDQN) form a disordered region. Over residues 116–125 (LPKKPAKKKQ) the composition is skewed to basic residues. The span at 135–146 (SPEKKAEGEDQN) shows a compositional bias: basic and acidic residues. Residues 147–364 (QFEERYNFDN…GALNRVVAYA (218 aa)) form a domain III, AAA+ region region. Positions 191, 193, 194, and 195 each coordinate ATP. The segment at 365–484 (TLSNRPINMD…VRLLMRQFEG (120 aa)) is domain IV, binds dsDNA.

This sequence belongs to the DnaA family. Oligomerizes as a right-handed, spiral filament on DNA at oriC.

It is found in the cytoplasm. Its function is as follows. Plays an essential role in the initiation and regulation of chromosomal replication. ATP-DnaA binds to the origin of replication (oriC) to initiate formation of the DNA replication initiation complex once per cell cycle. Binds the DnaA box (a 9 base pair repeat at the origin) and separates the double-stranded (ds)DNA. Forms a right-handed helical filament on oriC DNA; dsDNA binds to the exterior of the filament while single-stranded (ss)DNA is stabiized in the filament's interior. The ATP-DnaA-oriC complex binds and stabilizes one strand of the AT-rich DNA unwinding element (DUE), permitting loading of DNA polymerase. After initiation quickly degrades to an ADP-DnaA complex that is not apt for DNA replication. Binds acidic phospholipids. The protein is Chromosomal replication initiator protein DnaA of Zymomonas mobilis subsp. mobilis (strain ATCC 31821 / ZM4 / CP4).